We begin with the raw amino-acid sequence, 620 residues long: Chaperone protein HscA homolog (620 aa).

The protein belongs to the heat shock protein 70 family.

Its function is as follows. Chaperone involved in the maturation of iron-sulfur cluster-containing proteins. Has a low intrinsic ATPase activity which is markedly stimulated by HscB. This chain is Chaperone protein HscA homolog, found in Pseudomonas fluorescens (strain ATCC BAA-477 / NRRL B-23932 / Pf-5).